The chain runs to 507 residues: Sperm-associated antigen 6 (507 aa).

ARM repeat units lie at residues 31–70, 73–112, 115–154, 157–196, 199–238, 241–280, 325–365, and 402–441; these read PQNI…RLAN, DDLA…AVGK, PQLA…YIAR, TELS…DISK, PELA…QIAK, VDLA…EIAK, ENLA…QLGR, and KAIK…KVLP.

In terms of assembly, interacts with SPAG16 and SPAG17. As to expression, highly expressed in testis. Not detected in prostate, ovary, spleen, thymus, small intestine, colon and peripheral blood leukocytes.

It is found in the cytoplasm. The protein resides in the cytoskeleton. It localises to the cell projection. Its subcellular location is the cilium. The protein localises to the flagellum. It is found in the cilium axoneme. Its function is as follows. Important for structural integrity of the central apparatus in the sperm tail and for flagellar motility. The sequence is that of Sperm-associated antigen 6 (Spag6) from Mus musculus (Mouse).